Reading from the N-terminus, the 141-residue chain is Hemoglobin subunit alpha (141 aa).

Residues 1–141 (VLSPADKTNI…VSTVLTSKYR (141 aa)) form the Globin domain. Position 3 is a phosphoserine (Ser-3). At Lys-7 the chain carries N6-succinyllysine. Thr-8 bears the Phosphothreonine mark. Lys-11 is subject to N6-succinyllysine. At Lys-16 the chain carries N6-acetyllysine; alternate. Lys-16 bears the N6-succinyllysine; alternate mark. Residue Tyr-24 is modified to Phosphotyrosine. At Ser-35 the chain carries Phosphoserine. The residue at position 40 (Lys-40) is an N6-succinyllysine. Ser-49 carries the phosphoserine modification. Position 58 (His-58) interacts with O2. His-87 contributes to the heme b binding site. A Phosphoserine modification is found at Ser-102. Thr-108 carries the phosphothreonine modification. Phosphoserine is present on Ser-124. A phosphothreonine mark is found at Thr-134 and Thr-137. At Ser-138 the chain carries Phosphoserine.

The protein belongs to the globin family. Heterotetramer of two alpha chains and two beta chains. Red blood cells.

Functionally, involved in oxygen transport from the lung to the various peripheral tissues. Its function is as follows. Hemopressin acts as an antagonist peptide of the cannabinoid receptor CNR1. Hemopressin-binding efficiently blocks cannabinoid receptor CNR1 and subsequent signaling. This Canis lupus familiaris (Dog) protein is Hemoglobin subunit alpha (HBA).